The chain runs to 455 residues: ATP-dependent protease ATPase subunit HslU (455 aa).

ATP-binding positions include isoleucine 19 and 61–66 (GVGKTE). Positions 144 to 163 (ESKVGFANEPAEDAASKKEK) are disordered. ATP contacts are provided by aspartate 268, glutamate 333, and arginine 405.

It belongs to the ClpX chaperone family. HslU subfamily. A double ring-shaped homohexamer of HslV is capped on each side by a ring-shaped HslU homohexamer. The assembly of the HslU/HslV complex is dependent on binding of ATP.

It localises to the cytoplasm. ATPase subunit of a proteasome-like degradation complex; this subunit has chaperone activity. The binding of ATP and its subsequent hydrolysis by HslU are essential for unfolding of protein substrates subsequently hydrolyzed by HslV. HslU recognizes the N-terminal part of its protein substrates and unfolds these before they are guided to HslV for hydrolysis. The polypeptide is ATP-dependent protease ATPase subunit HslU (Francisella tularensis subsp. novicida (strain U112)).